Consider the following 695-residue polypeptide: Segment polarity protein dishevelled homolog DVL-1 (695 aa).

The 85-residue stretch at 1 to 85 (MAETKIIYHM…RVVSWLVLAE (85 aa)) folds into the DIX domain. The tract at residues 89-236 (SDAGSQGTDS…RLRQTDRASS (148 aa)) is disordered. The segment covering 142 to 151 (SHRRERARRR) has biased composition (basic residues). The segment covering 152–171 (NRDEAARTNGHPRGDRRREL) has biased composition (basic and acidic residues). Residues 177–192 (SASTVLSSELESSSFI) show a composition bias toward low complexity. Phosphoserine is present on serine 194. The span at 201–214 (SRLSSSTEQSTSSR) shows a compositional bias: low complexity. Positions 215 to 228 (LIRKHKCRRRKQRL) are enriched in basic residues. In terms of domain architecture, PDZ spans 251–323 (TVTLNMERHH…NDDAVRVLRE (73 aa)). The 75-residue stretch at 425–499 (PDSGLEIRDR…SEQCYYVFGD (75 aa)) folds into the DEP domain. Positions 551-580 (PAYQDPGFSYGSGSAGSQQSEGSKSSGSTR) are enriched in low complexity. Residues 551 to 641 (PAYQDPGFSY…SQASAVAPGL (91 aa)) are disordered. Over residues 622–635 (SQLSRGSSPRSQAS) the composition is skewed to polar residues.

Belongs to the DSH family. As to quaternary structure, interacts with BRD7 and INVS. Interacts (via PDZ domain) with the VANGL1 and VANGL2 (via C-terminus). Interacts (via PDZ domain) with NXN. Interacts with CXXC4. Interacts with ARRB1; the interaction is enhanced by phosphorylation of DVL1. Interacts with CYLD. Interacts (via PDZ domain) with RYK. Self-associates (via DIX domain) and forms higher homooligomers. Interacts (via PDZ domain) with DACT1 and FZD7, where DACT1 and FZD7 compete for the same binding site. Interacts (via DEP domain) with MUSK; the interaction is direct and mediates the formation a DVL1, MUSK and PAK1 ternary complex involved in AChR clustering. Interacts (via PDZ domain) with TMEM88. Interacts with DCDC2. Interacts with FOXK2. Interacts with PKD1 (via extracellular domain). Interacts (via PDZ domain) with CCDC88C/DAPLE; competes with CCDC88C for binding to frizzled receptor FZD7 and dissociates from CCDC88C following initiation of non-canonical Wnt signaling when CCDC88C displaces DVL1 from ligand-activated FZD7. In terms of processing, ubiquitinated; undergoes both 'Lys-48'-linked ubiquitination, leading to its subsequent degradation by the ubiquitin-proteasome pathway, and 'Lys-63'-linked ubiquitination. The interaction with INVS is required for ubiquitination. Deubiquitinated by CYLD, which acts on 'Lys-63'-linked ubiquitin chains.

It localises to the cell membrane. It is found in the cytoplasm. The protein localises to the cytosol. Its subcellular location is the cytoplasmic vesicle. In terms of biological role, participates in Wnt signaling by binding to the cytoplasmic C-terminus of frizzled family members and transducing the Wnt signal to down-stream effectors. Plays a role both in canonical and non-canonical Wnt signaling. Plays a role in the signal transduction pathways mediated by multiple Wnt genes. Required for LEF1 activation upon WNT1 and WNT3A signaling. DVL1 and PAK1 form a ternary complex with MUSK which is important for MUSK-dependent regulation of AChR clustering during the formation of the neuromuscular junction (NMJ). The polypeptide is Segment polarity protein dishevelled homolog DVL-1 (Dvl1) (Rattus norvegicus (Rat)).